Here is an 85-residue protein sequence, read N- to C-terminus: U4-theraphotoxin-Hhn1a (85 aa).

The N-terminal stretch at 1 to 22 (MKVTLIAILTCAAALVLHTTAA) is a signal peptide. Positions 23–48 (EELEAESQLMEVGMPDTELAAVDEER) are excised as a propeptide. Intrachain disulfides connect C52–C66, C56–C77, and C71–C82.

It belongs to the neurotoxin 12 (Hwtx-2) family. 02 (Hwtx-2) subfamily. In terms of assembly, monomer. Expressed by the venom gland.

Its subcellular location is the secreted. Neurotoxin active on both insects and mammals. In Cyriopagopus hainanus (Chinese bird spider), this protein is U4-theraphotoxin-Hhn1a.